We begin with the raw amino-acid sequence, 1110 residues long: Autophagy-related protein 11 (1110 aa).

Coiled coils occupy residues 264 to 309 (GKVN…ELHE) and 651 to 803 (AEMF…EKDE).

It belongs to the ATG11 family. In terms of assembly, homodimer.

Its subcellular location is the preautophagosomal structure membrane. The protein localises to the vacuole membrane. Its function is as follows. Involved in cytoplasm to vacuole transport (Cvt), pexophagy, mitophagy and nucleophagy. Recruits mitochondria for their selective degradation via autophagy (mitophagy) during starvation. Works as scaffold proteins that recruit ATG proteins to the pre-autophagosome (PAS), the site of vesicle/autophagosome formation. Required for the Cvt vesicles completion. Contributes through its regulation of pexophagy to survival during engulfment by host phagocytic cells during infection. Through its function in autophagy, acts as an important virulence factor that supports the viability of C.glabrata in the phagosomal compartment of infected innate immune cells. This is Autophagy-related protein 11 (ATG11) from Candida glabrata (strain ATCC 2001 / BCRC 20586 / JCM 3761 / NBRC 0622 / NRRL Y-65 / CBS 138) (Yeast).